The chain runs to 334 residues: MTHDKKNAKIIPFPHLKDRLVEKGMSSLKEKKYQEALELFSEAMKYDDTESDLHLGMAICFLELGELEEAESVCEKMLKEGYGHYFTVLQVYMTILIQLKKYEEVKSTIEAVLEENQLPAESAEQFYKLLDFSRKMTDPDREDEAWAEEYEDTIDTEKVLASPEEQMNLIHSLKDRNVAKYTGLLKTILQDPSAHPIIKTMIVMLLAEHEYSKPVHISKFGESLTIEPSEIVPPDAAPILHRVLRVLDETLGNENPTLYAAVEELWRRHLYVLYPFQPKLLSADLWAAALHKVGYEMHGIEIESEELHMMYEFTDRELDEACTMLKDIEEISYL.

TPR repeat units follow at residues 17–50 (KDRL…DDTE), 52–84 (DLHL…GYGH), and 195–230 (HPII…EPSE).

In Bacillus subtilis (strain 168), this protein is TPR repeat-containing protein YsoA (ysoA).